The following is a 583-amino-acid chain: Torsin-1A-interacting protein 1 (583 aa).

Residues 1-12 (MAGDGRRAEAVR) show a composition bias toward basic and acidic residues. Disordered regions lie at residues 1–254 (MAGD…RSSS) and 271–293 (AHDK…WAPQ). Residues 1–338 (MAGDGRRAEA…NASFVKRNRW (338 aa)) lie on the Nuclear side of the membrane. Position 60 is a phosphoserine (Ser60). 2 stretches are compositionally biased toward basic and acidic residues: residues 74 to 101 (VAKE…EVRE) and 115 to 124 (RPQETEEMKT). A phosphoserine mark is found at Ser135 and Ser143. Met146 is modified (methionine sulfoxide). Phosphoserine is present on residues Ser154, Ser156, and Ser157. A compositionally biased stretch (polar residues) spans 165-174 (QTDLSQTISK). Ser186 and Ser215 each carry phosphoserine. Over residues 216–225 (EEGETEEDDQ) the composition is skewed to acidic residues. Position 220 is a phosphothreonine (Thr220). Phosphoserine occurs at positions 227, 230, and 242. Residues 238-250 (RSRDSDESGDKTT) are compositionally biased toward basic and acidic residues. Polar residues predominate over residues 277–287 (SVLSSGYQKTP). Met301 bears the Methionine sulfoxide mark. Position 305 is a phosphoserine (Ser305). Lys308 is covalently cross-linked (Glycyl lysine isopeptide (Lys-Gly) (interchain with G-Cter in SUMO2)). Residues Ser309 and Ser315 each carry the phosphoserine modification. Positions 309–328 (SELGNQSPSTSSRQVTGQPQ) are disordered. The helical transmembrane segment at 339 to 355 (WLLPLIAALASGSFWFF) threads the bilayer. The Perinuclear space segment spans residues 356–583 (STPEVETTAV…ENALKRGICL (228 aa)). Positions 356 to 583 (STPEVETTAV…ENALKRGICL (228 aa)) are interaction with TOR1A. Residues 359–435 (EVETTAVQEF…SEQIADAYSS (77 aa)) are a coiled coil. Asn399 carries N-linked (GlcNAc...) asparagine glycosylation. Residue Met552 is modified to Methionine sulfoxide.

The protein belongs to the TOR1AIP family. Interacts with ATP1B4. Interacts with TOR1A (ATP-bound). Interacts with TOR1B, TOR2A and TOR3A. Interacts with VIM. Post-translationally, phosphorylated. Dephosphorylated at Ser-309 and Ser-315 by serine/threonine-protein phosphatase PP1. As to expression, expressed in muscle, liver and kidney. Major isoform present in liver, brain and heart (at protein level). Expressed at lower levels than isoform 4 in lung, kidney and spleen (at protein level). Similar levels of isoforms 1 and 4 are observed in ovary, testis and pancreas (at protein level). In terms of tissue distribution, expressed at higher levels than isoform 1 in lung, kidney and spleen (at protein level). Expressed at lower levels than isoform 1 in liver, brain and heart (at protein level). Similar levels of isoforms 1 and 4 are observed in ovary, testis and pancreas (at protein level).

The protein localises to the nucleus inner membrane. Its subcellular location is the nucleus envelope. It localises to the nucleus. Functionally, required for nuclear membrane integrity. Induces TOR1A and TOR1B ATPase activity and is required for their location on the nuclear membrane. Binds to A- and B-type lamins. Possible role in membrane attachment and assembly of the nuclear lamina. This Homo sapiens (Human) protein is Torsin-1A-interacting protein 1 (TOR1AIP1).